The sequence spans 268 residues: Imidazole glycerol phosphate synthase subunit HisF (268 aa).

Catalysis depends on residues aspartate 12 and aspartate 131.

The protein belongs to the HisA/HisF family. In terms of assembly, heterodimer of HisH and HisF.

The protein localises to the cytoplasm. It catalyses the reaction 5-[(5-phospho-1-deoxy-D-ribulos-1-ylimino)methylamino]-1-(5-phospho-beta-D-ribosyl)imidazole-4-carboxamide + L-glutamine = D-erythro-1-(imidazol-4-yl)glycerol 3-phosphate + 5-amino-1-(5-phospho-beta-D-ribosyl)imidazole-4-carboxamide + L-glutamate + H(+). The protein operates within amino-acid biosynthesis; L-histidine biosynthesis; L-histidine from 5-phospho-alpha-D-ribose 1-diphosphate: step 5/9. Functionally, IGPS catalyzes the conversion of PRFAR and glutamine to IGP, AICAR and glutamate. The HisF subunit catalyzes the cyclization activity that produces IGP and AICAR from PRFAR using the ammonia provided by the HisH subunit. The sequence is that of Imidazole glycerol phosphate synthase subunit HisF from Salinibacter ruber (strain DSM 13855 / M31).